The primary structure comprises 365 residues: Aminomethyltransferase (365 aa).

It belongs to the GcvT family. As to quaternary structure, the glycine cleavage system is composed of four proteins: P, T, L and H.

The enzyme catalyses N(6)-[(R)-S(8)-aminomethyldihydrolipoyl]-L-lysyl-[protein] + (6S)-5,6,7,8-tetrahydrofolate = N(6)-[(R)-dihydrolipoyl]-L-lysyl-[protein] + (6R)-5,10-methylene-5,6,7,8-tetrahydrofolate + NH4(+). In terms of biological role, the glycine cleavage system catalyzes the degradation of glycine. The polypeptide is Aminomethyltransferase (Chlorobium phaeobacteroides (strain DSM 266 / SMG 266 / 2430)).